The following is a 2346-amino-acid chain: Acetyl-CoA carboxylase 1 (2346 aa).

N-acetylmethionine is present on methionine 1. Phosphoserine is present on residues serine 5, serine 23, serine 25, serine 29, serine 34, serine 48, serine 50, and serine 53. At threonine 58 the chain carries Phosphothreonine. Serine 78 carries the phosphoserine modification. The residue at position 80 (serine 80) is a Phosphoserine; by AMPK. The Biotin carboxylation domain maps to 117–618 (VIEKVLIANN…GTGWLDRLIA (502 aa)). Residues 275 to 466 (SKRILNVPQE…LPAAQLQIAM (192 aa)) enclose the ATP-grasp domain. 315–320 (GGGGKG) provides a ligand contact to ATP. Positions 424, 437, and 439 each coordinate Mg(2+). Positions 424, 437, and 439 each coordinate Mn(2+). Arginine 441 is a catalytic residue. A Phosphothreonine modification is found at threonine 610. The Biotinyl-binding domain maps to 745-819 (FEKENDPSVL…DPGCVIAKMQ (75 aa)). Lysine 786 is modified (N6-biotinyllysine). Phosphoserine occurs at positions 835, 1201, 1216, and 1218. Threonine 1227 carries the phosphothreonine modification. Phosphoserine is present on residues serine 1259, serine 1263, and serine 1273. Residue lysine 1334 is modified to N6-acetyllysine. The CoA carboxyltransferase N-terminal domain maps to 1576-1914 (PYVTKDQLQS…SVYSSVPLLN (339 aa)). Positions 1576–2234 (PYVTKDQLQS…EDLVKKKIHN (659 aa)) are carboxyltransferase. Residues arginine 1823, lysine 2127, and arginine 2129 each coordinate CoA. One can recognise a CoA carboxyltransferase C-terminal domain in the interval 1918 to 2234 (PIDRVIEFVP…EDLVKKKIHN (317 aa)). The residue at position 2153 (threonine 2153) is a Phosphothreonine.

Monomer, homodimer, and homotetramer. Can form filamentous polymers. Interacts in its inactive phosphorylated form with the BRCT domains of BRCA1 which prevents ACACA dephosphorylation and inhibits lipid synthesis. Interacts with MID1IP1; interaction with MID1IP1 promotes oligomerization and increases its activity. Requires Mg(2+) as cofactor. The cofactor is Mn(2+). Biotin is required as a cofactor. Post-translationally, phosphorylation on Ser-1263 is required for interaction with BRCA1. In terms of processing, phosphorylation at Ser-80 by AMPK inactivates enzyme activity. The biotin cofactor is covalently attached to the central biotinyl-binding domain and is required for the catalytic activity.

It localises to the cytoplasm. Its subcellular location is the cytosol. It carries out the reaction hydrogencarbonate + acetyl-CoA + ATP = malonyl-CoA + ADP + phosphate + H(+). The protein operates within lipid metabolism; malonyl-CoA biosynthesis; malonyl-CoA from acetyl-CoA: step 1/1. Inhibited by phosphorylation. Citrate promotes oligomerization of the protein into filaments that correspond to the most active form of the carboxylase. Its function is as follows. Cytosolic enzyme that catalyzes the carboxylation of acetyl-CoA to malonyl-CoA, the first and rate-limiting step of de novo fatty acid biosynthesis. This is a 2 steps reaction starting with the ATP-dependent carboxylation of the biotin carried by the biotin carboxyl carrier (BCC) domain followed by the transfer of the carboxyl group from carboxylated biotin to acetyl-CoA. This chain is Acetyl-CoA carboxylase 1, found in Bos taurus (Bovine).